Consider the following 695-residue polypeptide: MAEAPPRRLGLGPPPGDAPRAELVALTAVQSEQGEAGGGGSPRRLGLLGSPLPPGAPLPGPGSGSGSACGQRSSAAHKRYRRLQNWVYNVLERPRGWAFVYHVFIFLLVFSCLVLSVLSTIQEHQELANECLLILEFVMIVVFGLEYIVRVWSAGCCCRYRGWQGRFRFARKPFCVIDFIVFVASVAVIAAGTQGNIFATSALRSMRFLQILRMVRMDRRGGTWKLLGSVVYAHSKELITAWYIGFLVLIFASFLVYLAEKDANSDFSSYADSLWWGTITLTTIGYGDKTPHTWLGRVLAAGFALLGISFFALPAGILGSGFALKVQEQHRQKHFEKRRMPAANLIQAAWRLYSTDMSRAYLTATWYYYDSILPSFRELALLFEHVQRARNGGLRPLEVRRAPVPDGAPSRYPPVATCHRPGSTSFCPGESSRMGIKDRIRMGSSQRRTGPSKQHLAPPTMPTSPSSEQVGEATSPTKVQKSWSFNDRTRFRASLRLKPRTSAEDAPSEEVAEEKSYQCELTVDDIMPAVKTVIRSIRILKFLVAKRKFKETLRPYDVKDVIEQYSAGHLDMLGRIKSLQTRVDQIVGRGPGDRKAREKGDKGPSDAEVVDEISMMGRVVKVEKQVQSIEHKLDLLLGFYSRCLRSGTSASLGAVQVPLFDPDITSDYHSPVDHEDISVSAQTLSISRSVSTNMD.

The disordered stretch occupies residues 1–21 (MAEAPPRRLGLGPPPGDAPRA). The Cytoplasmic segment spans residues 1-96 (MAEAPPRRLG…VYNVLERPRG (96 aa)). An a 1,2-diacyl-sn-glycero-3-phospho-(1D-myo-inositol-4,5-bisphosphate)-binding site is contributed by Arg93. A helical membrane pass occupies residues 97-118 (WAFVYHVFIFLLVFSCLVLSVL). Topologically, residues 119–129 (STIQEHQELAN) are extracellular. The helical transmembrane segment at 130 to 152 (ECLLILEFVMIVVFGLEYIVRVW) threads the bilayer. Residues 153-168 (SAGCCCRYRGWQGRFR) lie on the Cytoplasmic side of the membrane. Residues 169 to 191 (FARKPFCVIDFIVFVASVAVIAA) form a helical membrane-spanning segment. Lys172 contributes to the a 1,2-diacyl-sn-glycero-3-phospho-(1D-myo-inositol-4,5-bisphosphate) binding site. Over 192 to 202 (GTQGNIFATSA) the chain is Extracellular. A helical; Voltage-sensor transmembrane segment spans residues 203–223 (LRSMRFLQILRMVRMDRRGGT). Arg219, Arg220, Lys225, and Ser235 together coordinate a 1,2-diacyl-sn-glycero-3-phospho-(1D-myo-inositol-4,5-bisphosphate). The Cytoplasmic segment spans residues 224–235 (WKLLGSVVYAHS). Residues 236–258 (KELITAWYIGFLVLIFASFLVYL) traverse the membrane as a helical segment. The Extracellular portion of the chain corresponds to 259 to 270 (AEKDANSDFSSY). The segment at residues 271 to 292 (ADSLWWGTITLTTIGYGDKTPH) is an intramembrane region (pore-forming). Position 293 (Thr293) is a topological domain, extracellular. A helical membrane pass occupies residues 294–322 (WLGRVLAAGFALLGISFFALPAGILGSGF). Over 323-695 (ALKVQEQHRQ…ISRSVSTNMD (373 aa)) the chain is Cytoplasmic. Positions 330 and 333 each coordinate a 1,2-diacyl-sn-glycero-3-phospho-(1D-myo-inositol-4,5-bisphosphate). Positions 342-351 (AANLIQAAWR) are interaction with CALM. 2 disordered regions span residues 400-480 (RRAP…TKVQ) and 496-515 (RLKP…AEEK). Polar residues-rich tracts occupy residues 443-452 (GSSQRRTGPS) and 463-480 (TSPS…TKVQ). The interaction with CALM stretch occupies residues 535-549 (RSIRILKFLVAKRKF). The tract at residues 546–650 (KRKFKETLRP…SRCLRSGTSA (105 aa)) is C-terminal assembly domain (tetramerization). A disordered region spans residues 587-606 (VGRGPGDRKAREKGDKGPSD). A compositionally biased stretch (basic and acidic residues) spans 591-605 (PGDRKAREKGDKGPS). The stretch at 615–636 (MMGRVVKVEKQVQSIEHKLDLL) forms a coiled coil.

Belongs to the potassium channel family. KQT (TC 1.A.1.15) subfamily. Kv7.4/KCNQ4 sub-subfamily. Homotetramer. Interacts (via C-terminus) with calmodulin; forms a heterooctameric structure (with 4:4 KCNQ1:CALM stoichiometry); the interaction is calcium-independent, constitutive, participates in the proper assembly of a functional channel. The interaction with calcium-free CALM controls channel trafficking whereas interaction with calcium-bound CALM regulates channel gating. May form a functional heteromultimeric channel with KCNQ3. Interacts with HSP90AB1; promotes cell surface expression of KCNQ4. In terms of tissue distribution, expressed in the outer, but not the inner, sensory hair cells of the cochlea. Slightly expressed in heart, brain and skeletal muscle.

It is found in the basal cell membrane. It catalyses the reaction K(+)(in) = K(+)(out). Two molecules of phosphatidylinositol-4,5-bisphosphate (PIP2-I and PIP2-II) are essential to activate KCNQ4 channel by inducing the coupling of the voltage-sensing domain (VSD) and the pore-forming domain (PD). Upon channel activation, PIP2-I and PIP2-II disrupt the VSD-calmodulin/CALM interaction, causing the release of CALM from the VSD which triggers the opening of the gate. Calcium suppresses KCNQ4 channel current through calcium-bound CALM C-terminus. Therefore CALM acts as calcium sensor that controls channel activity. ML213 potentiates KCNQ4 channel. KCNQ4 channel is blocked by linopirdin, XE991 and bepridil, whereas clofilium is without significant effect. Muscarinic agonist oxotremorine-M strongly suppress KCNQ4 current in CHO cells in which cloned KCNQ4 channels were coexpressed with M1 muscarinic receptors. Functionally, pore-forming subunit of the voltage-gated potassium (Kv) channel involved in the regulation of sensory cells excitability in the cochlea. KCNQ4/Kv7.4 channel is composed of 4 pore-forming subunits assembled as tetramers. Promotes the outflow of potassium ions in the repolarization phase of action potential which plays a role in regulating membrane potential of excitable cells. The channel conducts a slowly activating and deactivating current. Current often shows some inward rectification at positive potentials. Channel may be selectively permeable in vitro to other cations besides potassium, in decreasing order of affinity K(+) = Rb(+) &gt; Cs(+) &gt; Na(+). Important for normal physiological function of inner ear such as sensory perception of sound. The sequence is that of Potassium voltage-gated channel subfamily KQT member 4 from Homo sapiens (Human).